We begin with the raw amino-acid sequence, 183 residues long: Nucleoplasmin-like protein NO29 (183 aa).

Acidic residues predominate over residues 126–166; the sequence is SDDEDLSGSEEEMEDEEEEEDDDDDDDDDDDDDDDDDEEEI. The tract at residues 126 to 183 is disordered; sequence SDDEDLSGSEEEMEDEEEEEDDDDDDDDDDDDDDDDDEEEITPIKPAKKPLKTLSRTF.

Belongs to the nucleoplasmin family.

The protein resides in the nucleus. Its subcellular location is the nucleolus. The chain is Nucleoplasmin-like protein NO29 from Xenopus laevis (African clawed frog).